A 431-amino-acid polypeptide reads, in one-letter code: MGNNIKVTFNPDKIAAWWPAVGTYYTTTYPQNQSVFQPGIYQTTSLINPKNQQELDSVLINRYKQIDWNTWQGFPVDQKFSLVSRDPPPKPYINQSAQTFEIKPGPIIVPGIRDIPRGLVPPQTPTNRDQGRKPTPPTPPLRDTHPHLTMKNQTFHLQGFVDGLRDLTTTERQHNAYRDPFTTLSPAVPTVSTILSPPSTTGDPALSPEMSPSSLLGLLAGLQVVYFLWTKILTIAQNLDWWCTSLSFPGGIPECTGQNSQFQTCKHLPTSCPPTCNGFRWMYLRRFIIYLLVLLLCLIFLLVLLDWKGLIPVCPLQPTTETTVNCRQCTISAQDMYTPPYCCCLKPTAGNCTCWPIPSSWALGNYLWEWALARLSWLNLLVPLLQWLGGISLIAWFLLIWMIWFWGPALLSILPPFIPIFVLFFLIWVYI.

G2 carries the N-myristoyl glycine; by host lipid modification. A pre-S1 region spans residues 2-148 (GNNIKVTFNP…PPLRDTHPHL (147 aa)). Residues 2–207 (GNNIKVTFNP…PSTTGDPALS (206 aa)) form a pre-S region. The Virion surface; in external conformation segment spans residues 2-214 (GNNIKVTFNP…ALSPEMSPSS (213 aa)). The Intravirion; in internal conformation segment spans residues 2–286 (GNNIKVTFNP…NGFRWMYLRR (285 aa)). N-linked (GlcNAc...) asparagine glycosylation is present at N3. Residues 115–147 (IPRGLVPPQTPTNRDQGRKPTPPTPPLRDTHPH) form a disordered region. Residues 149–207 (TMKNQTFHLQGFVDGLRDLTTTERQHNAYRDPFTTLSPAVPTVSTILSPPSTTGDPALS) form a pre-S2 region. Residues 215-235 (LLGLLAGLQVVYFLWTKILTI) form a helical membrane-spanning segment. The Intravirion; in external conformation segment spans residues 236 to 286 (AQNLDWWCTSLSFPGGIPECTGQNSQFQTCKHLPTSCPPTCNGFRWMYLRR). A helical membrane pass occupies residues 287–307 (FIIYLLVLLLCLIFLLVLLDW). Residues 308–379 (KGLIPVCPLQ…WALARLSWLN (72 aa)) are Virion surface-facing. An N-linked (GlcNAc...) asparagine; by host glycan is attached at N351. Residues 380–400 (LLVPLLQWLGGISLIAWFLLI) form a helical membrane-spanning segment. The Intravirion portion of the chain corresponds to 401–406 (WMIWFW). The helical transmembrane segment at 407-429 (GPALLSILPPFIPIFVLFFLIWV) threads the bilayer. The Virion surface portion of the chain corresponds to 430–431 (YI).

The protein belongs to the orthohepadnavirus major surface antigen family. As to quaternary structure, in its internal form (Li-HBsAg), interacts with the capsid protein and with the isoform S. Interacts with host chaperone CANX. Associates with host chaperone CANX through its pre-S2 N glycan; this association may be essential for isoform M proper secretion. In terms of assembly, interacts with isoform L. Interacts with the antigens of satellite virus HDV (HDVAgs); this interaction is required for encapsidation of HDV genomic RNA. In terms of processing, isoform M is N-terminally acetylated by host at a ratio of 90%, and N-glycosylated by host at the pre-S2 region. Myristoylated.

The protein resides in the virion membrane. In terms of biological role, the large envelope protein exists in two topological conformations, one which is termed 'external' or Le-HBsAg and the other 'internal' or Li-HBsAg. In its external conformation the protein attaches the virus to cell receptors and thereby initiating infection. This interaction determines the species specificity and liver tropism. This attachment induces virion internalization predominantly through caveolin-mediated endocytosis. The large envelope protein also assures fusion between virion membrane and endosomal membrane. In its internal conformation the protein plays a role in virion morphogenesis and mediates the contact with the nucleocapsid like a matrix protein. Functionally, the middle envelope protein plays an important role in the budding of the virion. It is involved in the induction of budding in a nucleocapsid independent way. In this process the majority of envelope proteins bud to form subviral lipoprotein particles of 22 nm of diameter that do not contain a nucleocapsid. The polypeptide is Large envelope protein (Marmota monax (Woodchuck)).